The primary structure comprises 336 residues: MNPNFTTEHTWQGRHDPEDGQAGRRVHHIACPIQVGELANQEPGVALIGFECDAGVERNKGRTGAKHAPSLIKQALANLAWHHPIPIYDLGNIRCEGDELEQAQQECAQVIQQALPHARAIVLGGGHEIAWATFQGLAQHFLATGVKQPRIGIINFDAHFDLRTFESELAPVRPSSGTPFNQIHHFCQQQGWDFHYACLGVSRASNTPALFERADKLGVWYVEDKAFSPLSLKDHLTQLQHFIDDCDYLYLTIDLDVFPAASAPGVSAPAARGVSLEALAPYFDRILHYKNKLMIADIAEYNPSFDIDQHTARLAARLCWDIANAMAEQVQSIRHP.

A compositionally biased stretch (polar residues) spans 1–10 (MNPNFTTEHT). The tract at residues 1–22 (MNPNFTTEHTWQGRHDPEDGQA) is disordered. Positions 11–22 (WQGRHDPEDGQA) are enriched in basic and acidic residues. His-127, Asp-157, His-159, Asp-161, Asp-254, and Asp-256 together coordinate Mn(2+).

Belongs to the arginase family. It depends on Mn(2+) as a cofactor.

It carries out the reaction N-formimidoyl-L-glutamate + H2O = formamide + L-glutamate. It participates in amino-acid degradation; L-histidine degradation into L-glutamate; L-glutamate from N-formimidoyl-L-glutamate (hydrolase route): step 1/1. Its function is as follows. Catalyzes the conversion of N-formimidoyl-L-glutamate to L-glutamate and formamide. This Vibrio cholerae serotype O1 (strain ATCC 39541 / Classical Ogawa 395 / O395) protein is Formimidoylglutamase.